A 73-amino-acid polypeptide reads, in one-letter code: Conotoxin MaI51 (73 aa).

Residues 1 to 19 (MQKLTILLLVAAVLLSTQA) form the signal peptide. Positions 20–41 (LNQEKRPKEMINVLSKGKTNAE) are excised as a propeptide. Glutamine 46 is modified (pyrrolidone carboxylic acid). Intrachain disulfides connect cysteine 47–cysteine 61, cysteine 54–cysteine 65, and cysteine 60–cysteine 69. Isoleucine 72 is modified (isoleucine amide).

It belongs to the conotoxin O2 superfamily. Expressed by the venom duct.

It is found in the secreted. The sequence is that of Conotoxin MaI51 from Conus marmoreus (Marble cone).